A 253-amino-acid chain; its full sequence is Short chain dehydrogenase ple7 (253 aa).

Residues 5–25 (IVIVTGASHGIGLATVNLLLA) form a helical membrane-spanning segment. 5 residues coordinate NADP(+): Val-8, Arg-116, Tyr-148, Lys-152, and Asn-184. Tyr-148 serves as the catalytic Proton acceptor. Lys-152 (lowers pKa of active site Tyr) is an active-site residue. Asn-187 carries N-linked (GlcNAc...) asparagine glycosylation.

The protein belongs to the short-chain dehydrogenases/reductases (SDR) family.

Its subcellular location is the membrane. The protein operates within secondary metabolite biosynthesis; terpenoid biosynthesis. Its function is as follows. Short chain dehydrogenase; part of the gene cluster that mediates the biosynthesis of pleuromutilin, a tricyclic diterpene showing antibacterial properties. The geranylgeranyl diphosphate (GGPP) synthase ple4 catalyzes the first step in pleuromutilin biosynthesis. GGPP is then substrate of the premutilin synthase (PS) ple3 to yield premutilin. Premutilin synthase is a bifunctional enzyme composed of the fusion of a class II diterpene cyclase (DTC) and a class I diterpene synthase (DTS), with the corresponding domains and active sites containing characteristic aspartate-rich motifs. GGPP is first converted to mutildienyl-diphosphate (MPP) at the class II DTC site. MPP is subsequently further cyclized at the class I DTS site, followed by a 1,5-hydride shift and addition of water prior to terminating deprotonation, to yield premutilin. The cytochrome P450 monooxygenases ple5 and ple6 hydroxylate premutilin at C-11 and C-3, respectively, producing 11-hydroxypremutilin and 3-hydroxypremutilin. The combination of the actions of both ple5 and ple6 leads to the production of 3,11-dihydroxypremutilin. The short chain dehydrogenase ple7 further converts 3,11-dihydroxypremutilin into mutilin. The acetyltransferase ple2 then acetylates mutilin to produce 14-O-acetylmutilin. Finally, the cytochrome P450 monooxygenase ple1 catalyzes hydroxylation on the alpha position of the acetyl side chain of 14-O-acetylmutilin to yield pleuromutilin. The protein is Short chain dehydrogenase ple7 of Rhodocybe pseudopiperita (Clitopilus pseudopiperitus).